The sequence spans 237 residues: Phosphoribosylaminoimidazole-succinocarboxamide synthase (237 aa).

The protein belongs to the SAICAR synthetase family.

It carries out the reaction 5-amino-1-(5-phospho-D-ribosyl)imidazole-4-carboxylate + L-aspartate + ATP = (2S)-2-[5-amino-1-(5-phospho-beta-D-ribosyl)imidazole-4-carboxamido]succinate + ADP + phosphate + 2 H(+). It functions in the pathway purine metabolism; IMP biosynthesis via de novo pathway; 5-amino-1-(5-phospho-D-ribosyl)imidazole-4-carboxamide from 5-amino-1-(5-phospho-D-ribosyl)imidazole-4-carboxylate: step 1/2. This chain is Phosphoribosylaminoimidazole-succinocarboxamide synthase, found in Escherichia coli O127:H6 (strain E2348/69 / EPEC).